A 624-amino-acid chain; its full sequence is APC membrane recruitment protein 2 (624 aa).

Disordered stretches follow at residues 1–308 and 342–596; these read MDSH…PPSE and EDVG…IPVS. The segment covering 74-91 has biased composition (basic and acidic residues); sequence SGKKEDAGGGEAQGKDAP. Positions 101 to 111 are enriched in low complexity; sequence SASSSVAKSHS. Composition is skewed to basic and acidic residues over residues 120–132 and 247–258; these read GRPE…ENAE and RRLEELCGERPD. Composition is skewed to low complexity over residues 272-282 and 295-307; these read ITGDIPITTIP and AAAP…DPPS. The segment covering 406 to 416 has biased composition (gly residues); the sequence is TGGGGGGGGGT. Over residues 450 to 464 the composition is skewed to basic and acidic residues; sequence NNKEEQKGREKEQHE. Polar residues predominate over residues 535–549; the sequence is PITTTCSLKTPSSTV.

The protein belongs to the Amer family.

The protein localises to the cell membrane. Negative regulator of the canonical Wnt signaling pathway involved in neuroectodermal patterning. Acts by specifically binding phosphatidylinositol 4,5-bisphosphate (PtdIns(4,5)P2), translocating to the cell membrane and interacting with key regulators of the canonical Wnt signaling pathway, such as components of the beta-catenin destruction complex. The protein is APC membrane recruitment protein 2 (AMER2) of Gallus gallus (Chicken).